Consider the following 200-residue polypeptide: Translation machinery-associated protein 22 (200 aa).

Positions 106 to 177 (VQIKRVERNK…DVLEWLVEVH (72 aa)) constitute an SUI1 domain.

This sequence belongs to the DENR family. Interacts with the 40S ribosomal subunit.

The protein resides in the cytoplasm. The polypeptide is Translation machinery-associated protein 22 (TMA22) (Coccidioides immitis (strain RS) (Valley fever fungus)).